The sequence spans 368 residues: UDP-N-acetylglucosamine--N-acetylmuramyl-(pentapeptide) pyrophosphoryl-undecaprenol N-acetylglucosamine transferase (368 aa).

UDP-N-acetyl-alpha-D-glucosamine contacts are provided by residues 13–15 (TGG), Asn-124, Arg-167, Ser-195, and Gln-296.

The protein belongs to the glycosyltransferase 28 family. MurG subfamily.

It localises to the cell inner membrane. The catalysed reaction is di-trans,octa-cis-undecaprenyl diphospho-N-acetyl-alpha-D-muramoyl-L-alanyl-D-glutamyl-meso-2,6-diaminopimeloyl-D-alanyl-D-alanine + UDP-N-acetyl-alpha-D-glucosamine = di-trans,octa-cis-undecaprenyl diphospho-[N-acetyl-alpha-D-glucosaminyl-(1-&gt;4)]-N-acetyl-alpha-D-muramoyl-L-alanyl-D-glutamyl-meso-2,6-diaminopimeloyl-D-alanyl-D-alanine + UDP + H(+). Its pathway is cell wall biogenesis; peptidoglycan biosynthesis. In terms of biological role, cell wall formation. Catalyzes the transfer of a GlcNAc subunit on undecaprenyl-pyrophosphoryl-MurNAc-pentapeptide (lipid intermediate I) to form undecaprenyl-pyrophosphoryl-MurNAc-(pentapeptide)GlcNAc (lipid intermediate II). The protein is UDP-N-acetylglucosamine--N-acetylmuramyl-(pentapeptide) pyrophosphoryl-undecaprenol N-acetylglucosamine transferase of Maricaulis maris (strain MCS10) (Caulobacter maris).